The chain runs to 836 residues: Serine/threonine-protein kinase ppk5 (836 aa).

Disordered regions lie at residues M1–P29, I192–S214, C230–I307, and T328–N381. Composition is skewed to polar residues over residues I192–P205, Q232–V241, and K265–T288. The segment covering S289 to D298 has biased composition (basic and acidic residues). Residues S338 to K347 show a composition bias toward basic residues. Residues S353 to S362 show a composition bias toward low complexity. A Protein kinase domain is found at Y518–I814. Residues V524–V532 and K547 each bind ATP. The active-site Proton acceptor is D644. Phosphotyrosine is present on Y678.

Belongs to the protein kinase superfamily. CMGC Ser/Thr protein kinase family. MNB/DYRK subfamily.

It is found in the cytoplasm. The catalysed reaction is L-seryl-[protein] + ATP = O-phospho-L-seryl-[protein] + ADP + H(+). It catalyses the reaction L-threonyl-[protein] + ATP = O-phospho-L-threonyl-[protein] + ADP + H(+). In terms of biological role, has a role in meiosis. This chain is Serine/threonine-protein kinase ppk5 (ppk5), found in Schizosaccharomyces pombe (strain 972 / ATCC 24843) (Fission yeast).